We begin with the raw amino-acid sequence, 86 residues long: Anti-adapter protein IraP (86 aa).

The stretch at 1–38 (MKNLIAELLVKLAQKEEEAKELTVQVEALEIVVTALLR) forms a coiled coil.

The protein belongs to the IraP family. Interacts with RssB.

Its subcellular location is the cytoplasm. Inhibits RpoS proteolysis by regulating RssB activity, thereby increasing the stability of the sigma stress factor RpoS especially during phosphate starvation, but also in stationary phase and during nitrogen starvation. Its effect on RpoS stability is due to its interaction with RssB, which probably blocks the interaction of RssB with RpoS, and the consequent delivery of the RssB-RpoS complex to the ClpXP protein degradation pathway. This chain is Anti-adapter protein IraP, found in Klebsiella pneumoniae (strain 342).